Here is a 116-residue protein sequence, read N- to C-terminus: Putative UPF0320 protein YJR162C (116 aa).

The protein belongs to the UPF0320 family.

The sequence is that of Putative UPF0320 protein YJR162C from Saccharomyces cerevisiae (strain ATCC 204508 / S288c) (Baker's yeast).